A 243-amino-acid chain; its full sequence is tRNA (guanine-N(1)-)-methyltransferase (243 aa).

S-adenosyl-L-methionine-binding positions include Gly113 and 133–138 (IGDFVL).

The protein belongs to the RNA methyltransferase TrmD family. Homodimer.

The protein resides in the cytoplasm. It catalyses the reaction guanosine(37) in tRNA + S-adenosyl-L-methionine = N(1)-methylguanosine(37) in tRNA + S-adenosyl-L-homocysteine + H(+). Specifically methylates guanosine-37 in various tRNAs. This Bacillus licheniformis (strain ATCC 14580 / DSM 13 / JCM 2505 / CCUG 7422 / NBRC 12200 / NCIMB 9375 / NCTC 10341 / NRRL NRS-1264 / Gibson 46) protein is tRNA (guanine-N(1)-)-methyltransferase.